The chain runs to 111 residues: Large ribosomal subunit protein eL34B (111 aa).

Position 76 is a phosphotyrosine (Tyr-76).

The protein belongs to the eukaryotic ribosomal protein eL34 family. In terms of assembly, component of the large ribosomal subunit (LSU). Mature yeast ribosomes consist of a small (40S) and a large (60S) subunit. The 40S small subunit contains 1 molecule of ribosomal RNA (18S rRNA) and at least 33 different proteins. The large 60S subunit contains 3 rRNA molecules (25S, 5.8S and 5S rRNA) and at least 46 different proteins.

The protein resides in the cytoplasm. Its subcellular location is the nucleus. It localises to the nucleolus. Its function is as follows. Component of the ribosome, a large ribonucleoprotein complex responsible for the synthesis of proteins in the cell. The small ribosomal subunit (SSU) binds messenger RNAs (mRNAs) and translates the encoded message by selecting cognate aminoacyl-transfer RNA (tRNA) molecules. The large subunit (LSU) contains the ribosomal catalytic site termed the peptidyl transferase center (PTC), which catalyzes the formation of peptide bonds, thereby polymerizing the amino acids delivered by tRNAs into a polypeptide chain. The nascent polypeptides leave the ribosome through a tunnel in the LSU and interact with protein factors that function in enzymatic processing, targeting, and the membrane insertion of nascent chains at the exit of the ribosomal tunnel. In Schizosaccharomyces pombe (strain 972 / ATCC 24843) (Fission yeast), this protein is Large ribosomal subunit protein eL34B (rpl3402).